Here is a 149-residue protein sequence, read N- to C-terminus: Large ribosomal subunit protein uL13 (149 aa).

The protein belongs to the universal ribosomal protein uL13 family. In terms of assembly, part of the 50S ribosomal subunit.

In terms of biological role, this protein is one of the early assembly proteins of the 50S ribosomal subunit, although it is not seen to bind rRNA by itself. It is important during the early stages of 50S assembly. This is Large ribosomal subunit protein uL13 from Thermobifida fusca (strain YX).